A 279-amino-acid chain; its full sequence is Ribonuclease Z (279 aa).

Residues His-61, His-63, Asp-65, His-66, His-153, Asp-176, and His-240 each contribute to the Zn(2+) site. The active-site Proton acceptor is Asp-65.

This sequence belongs to the RNase Z family. In terms of assembly, homodimer. Requires Zn(2+) as cofactor.

It catalyses the reaction Endonucleolytic cleavage of RNA, removing extra 3' nucleotides from tRNA precursor, generating 3' termini of tRNAs. A 3'-hydroxy group is left at the tRNA terminus and a 5'-phosphoryl group is left at the trailer molecule.. Its function is as follows. Zinc phosphodiesterase, which displays some tRNA 3'-processing endonuclease activity. Probably involved in tRNA maturation, by removing a 3'-trailer from precursor tRNA. This chain is Ribonuclease Z, found in Mycobacterium marinum (strain ATCC BAA-535 / M).